We begin with the raw amino-acid sequence, 256 residues long: Thiazole synthase (256 aa).

K95 (schiff-base intermediate with DXP) is an active-site residue. Residues G156, 182 to 183 (AG), and 204 to 205 (NT) contribute to the 1-deoxy-D-xylulose 5-phosphate site.

This sequence belongs to the ThiG family. As to quaternary structure, homotetramer. Forms heterodimers with either ThiH or ThiS.

It is found in the cytoplasm. The enzyme catalyses [ThiS sulfur-carrier protein]-C-terminal-Gly-aminoethanethioate + 2-iminoacetate + 1-deoxy-D-xylulose 5-phosphate = [ThiS sulfur-carrier protein]-C-terminal Gly-Gly + 2-[(2R,5Z)-2-carboxy-4-methylthiazol-5(2H)-ylidene]ethyl phosphate + 2 H2O + H(+). It functions in the pathway cofactor biosynthesis; thiamine diphosphate biosynthesis. Functionally, catalyzes the rearrangement of 1-deoxy-D-xylulose 5-phosphate (DXP) to produce the thiazole phosphate moiety of thiamine. Sulfur is provided by the thiocarboxylate moiety of the carrier protein ThiS. In vitro, sulfur can be provided by H(2)S. In Escherichia coli O157:H7, this protein is Thiazole synthase.